A 182-amino-acid polypeptide reads, in one-letter code: Bifunctional dihydrofolate reductase-thymidylate synthase (182 aa).

One can recognise a DHFR domain in the interval alanine 1–threonine 182. Glycine 25–glycine 31 lines the NADP(+) pocket. Aspartate 40 contacts substrate. Residues lysine 93 to serine 95 and leucine 114 to threonine 117 each bind NADP(+). Isoleucine 154, tyrosine 160, and threonine 175 together coordinate substrate. Residue glycine 155–glutamate 162 participates in NADP(+) binding.

It in the N-terminal section; belongs to the dihydrofolate reductase family. The protein in the C-terminal section; belongs to the thymidylate synthase family. In terms of assembly, homodimer.

It carries out the reaction (6S)-5,6,7,8-tetrahydrofolate + NADP(+) = 7,8-dihydrofolate + NADPH + H(+). It catalyses the reaction dUMP + (6R)-5,10-methylene-5,6,7,8-tetrahydrofolate = 7,8-dihydrofolate + dTMP. It participates in cofactor biosynthesis; tetrahydrofolate biosynthesis; 5,6,7,8-tetrahydrofolate from 7,8-dihydrofolate: step 1/1. In terms of biological role, bifunctional enzyme. Involved in de novo dTMP biosynthesis. Key enzyme in folate metabolism. Catalyzes an essential reaction for de novo glycine and purine synthesis, DNA precursor synthesis, and for the conversion of dUMP to dTMP. This Plasmodium vinckei protein is Bifunctional dihydrofolate reductase-thymidylate synthase.